Reading from the N-terminus, the 570-residue chain is MFS-type transporter ptmT (570 aa).

The span at 1–11 shows a compositional bias: polar residues; sequence MPDSGNIQLDT. Residues 1-34 form a disordered region; the sequence is MPDSGNIQLDTLQHKDHSQETTSHYEGGSQLPEQ. 14 consecutive transmembrane segments (helical) span residues 50 to 70, 94 to 114, 121 to 141, 151 to 171, 182 to 202, 210 to 230, 247 to 267, 278 to 298, 323 to 343, 356 to 376, 379 to 399, 413 to 433, 445 to 465, and 517 to 537; these read GLIR…CVGL, WYVS…GKIY, WTYL…AITP, AISG…LSNI, AFIG…GGVF, WCFY…FLFM, GLDW…LLAL, NVRI…WLLI, IYTI…PIWF, IMNL…SVLI, VGYM…GAGL, IGYQ…PLLV, VATA…SAIA, and VTHT…GAFI. N-linked (GlcNAc...) asparagine glycosylation occurs at Asn-541. Residues 550–570 are disordered; sequence PEPLVPGGSHSGAERDSKNGT. Residues 561 to 570 are compositionally biased toward basic and acidic residues; it reads GAERDSKNGT.

Belongs to the major facilitator superfamily. TCR/Tet family.

The protein resides in the cell membrane. Its function is as follows. MFS-type transporter; part of the gene cluster that mediates the biosynthesis of the indole diterpenes penitrems. May be involved in the efflux of penitrems. In Penicillium ochrochloron, this protein is MFS-type transporter ptmT.